A 435-amino-acid chain; its full sequence is Trigger factor (435 aa).

Residues 163–248 (GDFVTFDFKG…VKEIKVKELP (86 aa)) enclose the PPIase FKBP-type domain.

The protein belongs to the FKBP-type PPIase family. Tig subfamily.

Its subcellular location is the cytoplasm. It catalyses the reaction [protein]-peptidylproline (omega=180) = [protein]-peptidylproline (omega=0). Functionally, involved in protein export. Acts as a chaperone by maintaining the newly synthesized protein in an open conformation. Functions as a peptidyl-prolyl cis-trans isomerase. The protein is Trigger factor of Geobacter sp. (strain M21).